The sequence spans 131 residues: Phosphoribosyl-AMP cyclohydrolase (131 aa).

Asp-78 contacts Mg(2+). Cys-79 provides a ligand contact to Zn(2+). Mg(2+)-binding residues include Asp-80 and Asp-82. Zn(2+) is bound by residues Cys-96 and Cys-103.

It belongs to the PRA-CH family. In terms of assembly, homodimer. Mg(2+) is required as a cofactor. Zn(2+) serves as cofactor.

It is found in the cytoplasm. It catalyses the reaction 1-(5-phospho-beta-D-ribosyl)-5'-AMP + H2O = 1-(5-phospho-beta-D-ribosyl)-5-[(5-phospho-beta-D-ribosylamino)methylideneamino]imidazole-4-carboxamide. It functions in the pathway amino-acid biosynthesis; L-histidine biosynthesis; L-histidine from 5-phospho-alpha-D-ribose 1-diphosphate: step 3/9. Catalyzes the hydrolysis of the adenine ring of phosphoribosyl-AMP. The polypeptide is Phosphoribosyl-AMP cyclohydrolase (Neisseria meningitidis serogroup A / serotype 4A (strain DSM 15465 / Z2491)).